Consider the following 388-residue polypeptide: Nesprin-4 (388 aa).

The Cytoplasmic segment spans residues 1–339 (MALVPPLGRE…GVPAPASKRP (339 aa)). Positions 60-92 (ELKSTESATSPSRLPLASSHEHQDGGKPCEHSD) are disordered. Positions 78-92 (SHEHQDGGKPCEHSD) are enriched in basic and acidic residues. The 58-residue stretch at 331-388 (VPAPASKRPLTLFFLLLFLLLVGATLLLPLSGVSCCSHARLARTPYLVLSYVNGLPPI) folds into the KASH domain. A helical; Anchor for type IV membrane protein transmembrane segment spans residues 340 to 360 (LTLFFLLLFLLLVGATLLLPL). Residues 361–388 (SGVSCCSHARLARTPYLVLSYVNGLPPI) are Perinuclear space-facing.

It belongs to the nesprin family. As to quaternary structure, core component of LINC complexes which are composed of inner nuclear membrane SUN domain-containing proteins coupled to outer nuclear membrane KASH domain-containing nesprins. SUN and KASH domain-containing proteins seem to bind each other promiscuously; however, differentially expression of LINC complex constituents can give rise to specific assemblies. Probably part of a SUN1-containing LINC complex. Interacts with kinesins KIF5B and KLC1. The disulfid bond with SUN1 or SUN2 is required for stability of the respective LINC complex under tensile forces. As to expression, expressed in secretory epithelial cells, such as those found in exocrine pancreas, bulbourethral gland, mammary gland and salivary gland (at protein level). Also expressed in the cochlea, where it is restricted primarily to the 3 rows of outer hair cells and 1 row of inner hair cells (at protein level). Not detected in other cells of the cochlea, including Deiter's cells and pillar cells, nor in liver and kidney (at protein level).

The protein localises to the nucleus outer membrane. Functionally, as a component of the LINC (LInker of Nucleoskeleton and Cytoskeleton) complex, involved in the connection between the nuclear lamina and the cytoskeleton. The nucleocytoplasmic interactions established by the LINC complex play an important role in the transmission of mechanical forces across the nuclear envelope and in nuclear movement and positioning. Behaves as a kinesin cargo, providing a functional binding site for kinesin-1 at the nuclear envelope. Hence may contribute to the establishment of secretory epithelial morphology, by promoting kinesin-dependent apical migration of the centrosome and Golgi apparatus and basal localization of the nucleus. This Mus musculus (Mouse) protein is Nesprin-4 (Syne4).